A 323-amino-acid chain; its full sequence is Fructose-1,6-bisphosphatase class 1 (323 aa).

Residues Glu-84, Asp-103, Leu-105, and Asp-106 each contribute to the Mg(2+) site. Substrate is bound by residues 106-109 (DGSS), Asn-198, and Lys-264. Position 270 (Glu-270) interacts with Mg(2+).

The protein belongs to the FBPase class 1 family. Homotetramer. It depends on Mg(2+) as a cofactor.

The protein resides in the cytoplasm. The catalysed reaction is beta-D-fructose 1,6-bisphosphate + H2O = beta-D-fructose 6-phosphate + phosphate. Its pathway is carbohydrate biosynthesis; gluconeogenesis. In Hydrogenovibrio crunogenus (strain DSM 25203 / XCL-2) (Thiomicrospira crunogena), this protein is Fructose-1,6-bisphosphatase class 1.